The following is a 478-amino-acid chain: Calcitonin receptor (478 aa).

A signal peptide spans 1–22 (MRFTFTRQFLAFFILISNPASI). Over 23 to 146 (LPRSENLTFP…FTPEKLQNAY (124 aa)) the chain is Extracellular. Asn-28, Asn-73, Asn-125, and Asn-130 each carry an N-linked (GlcNAc...) asparagine glycan. Intrachain disulfides connect Cys-55-Cys-81, Cys-72-Cys-112, and Cys-95-Cys-134. The chain crosses the membrane as a helical span at residues 147-169 (VLYYLAIVGHSMSIITLVVSLGI). At 170 to 181 (FVYFRSLGCQRV) the chain is on the cytoplasmic side. The chain crosses the membrane as a helical span at residues 182 to 202 (TLHKNMFLTYILNSMIIIIHL). At 203-219 (VEVVPNGELVRKDPVSC) the chain is on the extracellular side. Cys-219 and Cys-289 are joined by a disulfide. A helical transmembrane segment spans residues 220–242 (KILHFFHQYMMACNYFWMLCEGI). Residues 243-259 (YLHTLIVVSVFNEAKHL) lie on the Cytoplasmic side of the membrane. Residues 260-280 (RWYYLLGWGFPLVPTTIHAIT) traverse the membrane as a helical segment. At 281-296 (RALYFNDNCWISVDTH) the chain is on the extracellular side. The chain crosses the membrane as a helical span at residues 297–320 (LLYIIHGPVMVALVVNFFFLLNIV). The Cytoplasmic segment spans residues 321–340 (RVLVTKMRETHEAESYMYLK). The helical transmembrane segment at 341–359 (AVKATMILVPLLGIQFVVF) threads the bilayer. The Extracellular portion of the chain corresponds to 360–367 (PWRPSNKV). The helical transmembrane segment at 368–394 (LGKIYDYFMHSLIHFQGFFVATIYCFC) threads the bilayer. The Cytoplasmic portion of the chain corresponds to 395–478 (NNEVQTTLKR…LNIIEKESSA (84 aa)).

Belongs to the G-protein coupled receptor 2 family. As to quaternary structure, heterodimer of CALCR and RAMP1, RAMP2 or RAMP3; the receptor complexes function as AMYR1, AMYR2 and AMYR3 receptors, respectively, and respond to amylin/IAPP, calcitonin/CT and CGRP1 ligands. Interacts with GPRASP2.

It is found in the cell membrane. Its function is as follows. G protein-coupled receptor activated by ligand peptides amylin (IAPP), calcitonin (CT/CALCA) and calcitonin gene-related peptide type 1 (CGRP1/CALCA). CALCR interacts with receptor-activity-modifying proteins RAMP1, 2 and 3 to form receptor complexes AMYR1, 2 and 3, respectively. IAPP, CT and CGRP1 activate CALCR and AMYRs with distinct modes of receptor activation resulting in specific phenotypes. Ligand binding causes a conformation change that triggers signaling via guanine nucleotide-binding proteins (G proteins) and modulates the activity of downstream effectors. Activates cAMP-dependent pathway. The chain is Calcitonin receptor from Cavia porcellus (Guinea pig).